A 259-amino-acid chain; its full sequence is S-methyl-5'-thioadenosine phosphorylase (259 aa).

Residues serine 9 and 50–51 (RH) each bind phosphate. Methionine 175 provides a ligand contact to substrate. Threonine 176 contributes to the phosphate binding site. 199-201 (DLD) contributes to the substrate binding site.

This sequence belongs to the PNP/MTAP phosphorylase family. MTAP subfamily. In terms of assembly, homohexamer. Dimer of a homotrimer.

The catalysed reaction is S-methyl-5'-thioadenosine + phosphate = 5-(methylsulfanyl)-alpha-D-ribose 1-phosphate + adenine. It functions in the pathway amino-acid biosynthesis; L-methionine biosynthesis via salvage pathway; S-methyl-5-thio-alpha-D-ribose 1-phosphate from S-methyl-5'-thioadenosine (phosphorylase route): step 1/1. Functionally, catalyzes the reversible phosphorylation of S-methyl-5'-thioadenosine (MTA) to adenine and 5-methylthioribose-1-phosphate. Involved in the breakdown of MTA, a major by-product of polyamine biosynthesis. Responsible for the first step in the methionine salvage pathway after MTA has been generated from S-adenosylmethionine. Has broad substrate specificity with 6-aminopurine nucleosides as preferred substrates. The chain is S-methyl-5'-thioadenosine phosphorylase from Mycolicibacterium smegmatis (strain ATCC 700084 / mc(2)155) (Mycobacterium smegmatis).